Consider the following 593-residue polypeptide: Zinc metalloproteinase-disintegrin-like atrase-B (593 aa).

The signal sequence occupies residues 1-20 (MIQALLVIICLAVFPHQGSS). The propeptide occupies 21 to 191 (IILESGNVND…DESIEKTSQL (171 aa)). In terms of domain architecture, Peptidase M12B spans 205–400 (KYIEFYVIVD…DRPQCILNKP (196 aa)). Ca(2+)-binding residues include Glu208 and Asp292. Intrachain disulfides connect Cys316-Cys395, Cys356-Cys379, and Cys358-Cys363. Asn319 carries N-linked (GlcNAc...) asparagine glycosylation. Position 341 (His341) interacts with Zn(2+). Glu342 is an active-site residue. 2 residues coordinate Zn(2+): His345 and His351. Cys395, Asn398, Ile410, Asn413, Phe415, Glu417, Glu420, and Asp423 together coordinate Ca(2+). In terms of domain architecture, Disintegrin spans 408–477 (PPICGNYFVE…ECPTDSLQRN (70 aa)). Disulfide bonds link Cys422-Cys435, Cys424-Cys430, Cys434-Cys440, Cys449-Cys469, Cys456-Cys488, Cys481-Cys493, Cys500-Cys550, Cys515-Cys558, Cys528-Cys538, Cys545-Cys581, and Cys575-Cys586. A D/ECD-tripeptide motif is present at residues 455-457 (DCD). Ca(2+)-binding residues include Asp457, Leu458, Glu460, and Asp472. N-linked (GlcNAc...) asparagine glycosylation occurs at Asn490.

Belongs to the venom metalloproteinase (M12B) family. P-III subfamily. P-IIIa sub-subfamily. Monomer. Zn(2+) serves as cofactor. Expressed by the venom gland.

It is found in the secreted. Inhibited by EDTA, EGTA, 1,10-phenanthroline and DTT. Not inhibited by PMSF and SBTI. Functionally, snake venom zinc protease that inhibits the classical and alternative pathways of complement by cleaving factor B, C6, C7, and C8. Also slowly and selectively degrades alpha-chain of fibrinogen (FGA), and shows edema-inducing activity. This is Zinc metalloproteinase-disintegrin-like atrase-B from Naja atra (Chinese cobra).